The chain runs to 185 residues: Large ribosomal subunit protein uL6m (185 aa).

It belongs to the universal ribosomal protein uL6 family.

It localises to the mitochondrion. The sequence is that of Large ribosomal subunit protein uL6m (RPL6) from Reclinomonas americana.